Consider the following 605-residue polypeptide: Exo-beta-1,3-glucanase (605 aa).

The segment at 1-23 (MHVPPTDPARSAPPASPHRRRRP) is disordered. An N-terminal signal peptide occupies residues 1–44 (MHVPPTDPARSAPPASPHRRRRPKALGLTALAAAMLMAVPTTQA). Substrate contacts are provided by residues Q174, 194–196 (YGW), Q217, 446–449 (WRAD), and 480–481 (EH). E502 functions as the Proton donor in the catalytic mechanism. Y505 is a binding site for substrate.

The protein belongs to the glycosyl hydrolase 55 family.

The protein localises to the secreted. The catalysed reaction is Successive hydrolysis of beta-D-glucose units from the non-reducing ends of (1-&gt;3)-beta-D-glucans, releasing alpha-glucose.. Its function is as follows. Exo-beta-1,3-glucanase that specifically hydrolyzes laminarin and laminarioligosaccharides, producing glucose and laminaribiose as end products. This chain is Exo-beta-1,3-glucanase, found in Streptomyces sp. (strain SirexAA-E / ActE).